A 500-amino-acid chain; its full sequence is Probable transcription factor FPSE_09189 (500 aa).

Disordered stretches follow at residues 161–197 (MVRH…PSLA) and 457–500 (IRTG…TQLE). Positions 459 to 474 (TGHEDSSRDGGRENKA) are enriched in basic and acidic residues. A compositionally biased stretch (polar residues) spans 475-484 (MNRNRSTGNS).

It localises to the nucleus. In terms of biological role, the two putative transcription factors FPSE_09188 and FPSE_09189 could be responsible for orchestrating expression of the W493 A and B biosynthesis cluster genes. W493 A and B consist of six amino acid residues D-allo-thr, L-Ala, D-Ala, L-Gln, D-Tyr, and L-Val/L-Ile linked to a 3-hydroxy-4-methyltetradecanoic acid polyketide chain. The sequence is that of Probable transcription factor FPSE_09189 from Fusarium pseudograminearum (strain CS3096) (Wheat and barley crown-rot fungus).